A 718-amino-acid polypeptide reads, in one-letter code: Telomeric repeat-binding factor 2 (718 aa).

Disordered regions lie at residues Met-1–Asp-22 and Asn-219–Glu-286. 2 stretches are compositionally biased toward basic and acidic residues: residues Ala-8 to Asp-22 and Asn-219 to Arg-228. The interval Glu-24–Ser-220 is TRFH dimerization. 15 repeat units span residues Gly-257 to Ala-269, Gly-270 to Thr-282, Gly-283 to Val-295, Arg-296 to Gln-308, Gly-309 to Met-321, Gly-322 to Leu-334, Gly-335 to Val-347, Arg-348 to Val-360, Gly-361 to Ala-373, Arg-374 to Pro-386, Gly-387 to Val-399, Arg-400 to Val-412, Arg-413 to Val-425, Arg-426 to Ala-438, and Gly-439 to Thr-451. Residues Gly-257–Thr-451 are 15 X 13 AA approximate tandem repeats. Disordered stretches follow at residues Thr-342–Pro-455 and Phe-524–Glu-641. A compositionally biased stretch (basic and acidic residues) spans Ala-405–Val-425. The segment covering Pro-533–Ser-543 has biased composition (polar residues). The Nuclear localization signal motif lies at Arg-545–Lys-550. The segment covering Ser-584–Ser-595 has biased composition (low complexity). Polar residues predominate over residues Pro-615–Tyr-630. An HTH myb-type domain is found at Lys-664–Ile-717. The segment at residues Trp-688 to Lys-713 is a DNA-binding region (H-T-H motif).

In terms of assembly, homodimer. Component of the shelterin complex (telosome). Interacts with TERF2IP/RAP1. Highly expressed in embryo.

It localises to the nucleus. The protein resides in the chromosome. It is found in the telomere. Functionally, binds the telomeric double-stranded 5'-TTAGGG-3' repeat and plays a central role in telomere maintenance and protection against end-to-end fusion of chromosomes. In addition to its telomeric DNA-binding role, required to recruit a number of factors and enzymes required for telomere protection, including the shelterin complex, TERF2IP/RAP1 and DCLRE1B/Apollo. Component of the shelterin complex (telosome) that is involved in the regulation of telomere length and protection. Shelterin associates with arrays of double-stranded 5'-TTAGGG-3' repeats added by telomerase and protects chromosome ends; without its protective activity, telomeres are no longer hidden from the DNA damage surveillance and chromosome ends are inappropriately processed by DNA repair pathways. Together with DCLRE1B/Apollo, plays a key role in telomeric loop (T loop) formation by generating 3' single-stranded overhang at the leading end telomeres: T loops have been proposed to protect chromosome ends from degradation and repair. Required both to recruit DCLRE1B/Apollo to telomeres and activate the exonuclease activity of DCLRE1B/Apollo. Together with DCLRE1B/Apollo, required to control the amount of DNA topoisomerase (TOP1, TOP2A and TOP2B) needed for telomere replication during fork passage and prevent aberrant telomere topology. Recruits TERF2IP/RAP1 to telomeres, thereby participating in to repressing homology-directed repair (HDR), which can affect telomere length. The sequence is that of Telomeric repeat-binding factor 2 (TERF2) from Gallus gallus (Chicken).